The sequence spans 319 residues: Small ribosomal subunit protein RACK1 (319 aa).

Alanine 2 carries the post-translational modification N-acetylalanine. WD repeat units lie at residues 15–55 (GHNG…QKFG), 63–102 (GHSHIVQDCTLTADGAYALSASWDKTLRLWDVATGETYQR), 105–145 (GHKS…ATLL), 147–191 (HNDW…IEAD), 194–233 (GHNSNINTLTASPDGTLIASAGKDGEIMLWNLAAKKAMYT), 235–275 (SAQD…DDLR), and 284–319 (AAEPHAVSLAWSADGQTLFAGYTDNVIRVWQVMTAN). Residues lysine 46 and lysine 53 each participate in a glycyl lysine isopeptide (Lys-Gly) (interchain with G-Cter in ubiquitin) cross-link. Residue threonine 96 is modified to Phosphothreonine. Glycyl lysine isopeptide (Lys-Gly) (interchain with G-Cter in ubiquitin) cross-links involve residues lysine 107, lysine 137, and lysine 161. The residue at position 168 (threonine 168) is a Phosphothreonine.

Belongs to the WD repeat G protein beta family. Ribosomal protein RACK1 subfamily. Component of the small ribosomal subunit (SSU). Mature yeast ribosomes consist of a small (40S) and a large (60S) subunit. The 40S small subunit contains 1 molecule of ribosomal RNA (18S rRNA) and 33 different proteins (encoded by 57 genes). The large 60S subunit contains 3 rRNA molecules (25S, 5.8S and 5S rRNA) and 46 different proteins (encoded by 81 genes). RACK1 is located at the head of the SSU in the vicinity of the mRNA exit channel. RACK1 interacts with the mRNA-binding protein SCP16. RACK1 also exists simultaneously as a homodimer in a cytosolic non-ribosome-bound form.

It localises to the cytoplasm. Functionally, component of the ribosome, a large ribonucleoprotein complex responsible for the synthesis of proteins in the cell. The small ribosomal subunit (SSU) binds messenger RNAs (mRNAs) and translates the encoded message by selecting cognate aminoacyl-transfer RNA (tRNA) molecules. The large subunit (LSU) contains the ribosomal catalytic site termed the peptidyl transferase center (PTC), which catalyzes the formation of peptide bonds, thereby polymerizing the amino acids delivered by tRNAs into a polypeptide chain. The nascent polypeptides leave the ribosome through a tunnel in the LSU and interact with protein factors that function in enzymatic processing, targeting, and the membrane insertion of nascent chains at the exit of the ribosomal tunnel. Located at the head of the 40S ribosomal subunit in the vicinity of the mRNA exit channel, RACK1 serves as a scaffold protein that can recruit other proteins to the ribosome. Involved in induction of the ribosome quality control (RQC) pathway; a pathway that degrades nascent peptide chains during problematic translation. Involved in the negative regulation of translation of a specific subset of proteins. The sequence is that of Small ribosomal subunit protein RACK1 from Saccharomyces cerevisiae (strain ATCC 204508 / S288c) (Baker's yeast).